Reading from the N-terminus, the 548-residue chain is CTP synthase (548 aa).

Positions 1–265 are amidoligase domain; it reads MTRYIFVTGG…DDIICDKLRI (265 aa). Serine 13 lines the CTP pocket. Serine 13 lines the UTP pocket. ATP is bound by residues 14–19 and aspartate 71; that span reads SLGKGI. Positions 71 and 139 each coordinate Mg(2+). CTP-binding positions include 146-148, 186-191, and lysine 222; these read DIE and KTKPTQ. Residues 186 to 191 and lysine 222 contribute to the UTP site; that span reads KTKPTQ. The 252-residue stretch at 290–541 folds into the Glutamine amidotransferase type-1 domain; the sequence is NIAMVGKYME…VNAALAYKAA (252 aa). Glycine 351 contacts L-glutamine. The Nucleophile; for glutamine hydrolysis role is filled by cysteine 378. Residues 379–382, glutamate 402, and arginine 469 contribute to the L-glutamine site; that span reads LGMQ. Active-site residues include histidine 514 and glutamate 516.

Belongs to the CTP synthase family. Homotetramer.

The enzyme catalyses UTP + L-glutamine + ATP + H2O = CTP + L-glutamate + ADP + phosphate + 2 H(+). The catalysed reaction is L-glutamine + H2O = L-glutamate + NH4(+). It carries out the reaction UTP + NH4(+) + ATP = CTP + ADP + phosphate + 2 H(+). It functions in the pathway pyrimidine metabolism; CTP biosynthesis via de novo pathway; CTP from UDP: step 2/2. Allosterically activated by GTP, when glutamine is the substrate; GTP has no effect on the reaction when ammonia is the substrate. The allosteric effector GTP functions by stabilizing the protein conformation that binds the tetrahedral intermediate(s) formed during glutamine hydrolysis. Inhibited by the product CTP, via allosteric rather than competitive inhibition. Functionally, catalyzes the ATP-dependent amination of UTP to CTP with either L-glutamine or ammonia as the source of nitrogen. Regulates intracellular CTP levels through interactions with the four ribonucleotide triphosphates. The chain is CTP synthase from Chromohalobacter salexigens (strain ATCC BAA-138 / DSM 3043 / CIP 106854 / NCIMB 13768 / 1H11).